We begin with the raw amino-acid sequence, 429 residues long: Adenylosuccinate synthetase (429 aa).

Residues 12-18 (GDEGKGK) and 40-42 (GHT) each bind GTP. The active-site Proton acceptor is the Asp13. Positions 13 and 40 each coordinate Mg(2+). IMP-binding positions include 13-16 (DEGK), 38-41 (NAGH), Thr128, Arg142, Gln223, Thr238, and Arg302. The Proton donor role is filled by His41. A substrate-binding site is contributed by 298–304 (ATTGRKR). GTP is bound by residues Arg304, 330–332 (KLD), and 412–414 (GTG).

Belongs to the adenylosuccinate synthetase family. As to quaternary structure, homodimer. The cofactor is Mg(2+).

It localises to the cytoplasm. The catalysed reaction is IMP + L-aspartate + GTP = N(6)-(1,2-dicarboxyethyl)-AMP + GDP + phosphate + 2 H(+). It functions in the pathway purine metabolism; AMP biosynthesis via de novo pathway; AMP from IMP: step 1/2. Functionally, plays an important role in the de novo pathway of purine nucleotide biosynthesis. Catalyzes the first committed step in the biosynthesis of AMP from IMP. The polypeptide is Adenylosuccinate synthetase (Tropheryma whipplei (strain TW08/27) (Whipple's bacillus)).